The following is a 429-amino-acid chain: Transcriptional coactivator AacuS (429 aa).

An HTH iclR-type domain is found at 80 to 144 (MASQTQLLAC…GFLQEPELGH (65 aa)). The H-T-H motif DNA-binding region spans 110-129 (IKDVAELIGVPENHICRIVR).

The protein localises to the nucleus. In terms of biological role, transcriptional coactivator; part of the gene cluster that mediates the biosynthesis of the tetrahydroxanthone dimer secalonic acid D. The sequence is that of Transcriptional coactivator AacuS from Aspergillus aculeatus (strain ATCC 16872 / CBS 172.66 / WB 5094).